Here is a 397-residue protein sequence, read N- to C-terminus: Odorant receptor 59a (397 aa).

The Cytoplasmic segment spans residues 1 to 36 (MAEVRVDSLEFFKSHWTAWRYLGVAHFRVENWKNLY). The helical transmembrane segment at 37–57 (VFYSIVSNLLVTLCYPVHLGI) threads the bilayer. Residues 58–68 (SLFRNRTITED) lie on the Extracellular side of the membrane. N-linked (GlcNAc...) asparagine glycosylation is present at Asn-62. The chain crosses the membrane as a helical span at residues 69–92 (ILNLTTFATCTACSVKCLLYAYNI). Residues 93 to 128 (KDVLEMERLLRLLDERVVGPEQRSIYGQVRVQLRNV) are Cytoplasmic-facing. Residues 129–149 (LYVFIGIYMPCALFAELSFLF) form a helical membrane-spanning segment. The Extracellular portion of the chain corresponds to 150–179 (KEERGLMYPAWFPFDWLHSTRNYYIANAYQ). A helical transmembrane segment spans residues 180–200 (IVGISFQLLQNYVSDCFPAVV). Over 201–274 (LCLISSHIKM…IEAFISLPML (74 aa)) the chain is Cytoplasmic. Residues 275 to 295 (IQFTVTALNVCIGLAALVFFV) traverse the membrane as a helical segment. Topologically, residues 296-301 (SEPMAR) are extracellular. The chain crosses the membrane as a helical span at residues 302-322 (MYFIFYSLAMPLQIFPSCFFG). At 323–372 (TDNEYWFGRLHYAAFSCNWHTQNRSFKRKMMLFVEQSLKKSTAVAGGMMR) the chain is on the cytoplasmic side. Residues 373–393 (IHLDTFFSTLKGAYSLFTIII) traverse the membrane as a helical segment. The Extracellular portion of the chain corresponds to 394-397 (RMRK).

Belongs to the insect chemoreceptor superfamily. Heteromeric odorant receptor channel (TC 1.A.69) family. Or2a subfamily. In terms of assembly, interacts with Orco. Complexes exist early in the endomembrane system in olfactory sensory neurons (OSNs), coupling these complexes to the conserved ciliary trafficking pathway. In terms of tissue distribution, expressed in neurons of the third antennal segment.

The protein localises to the cell membrane. Functionally, odorant receptor which mediates acceptance or avoidance behavior, depending on its substrates. The odorant receptor repertoire encodes a large collection of odor stimuli that vary widely in identity, intensity, and duration. May form a complex with Orco to form odorant-sensing units, providing sensitive and prolonged odorant signaling and calcium permeability. Involved in the behavioral responses to ethyl acetate, anisole, hexanoic acid, and pyrazines. The sequence is that of Odorant receptor 59a (Or59a) from Drosophila melanogaster (Fruit fly).